Here is a 114-residue protein sequence, read N- to C-terminus: Transcription initiation factor IIA subunit 2 (114 aa).

This sequence belongs to the TFIIA subunit 2 family. TFIIA is a heterodimer composed of the large toa1 and the small toa2 subunits.

It is found in the nucleus. Its function is as follows. TFIIA is a component of the transcription machinery of RNA polymerase II and plays an important role in transcriptional activation. TFIIA in a complex with tbp mediates transcriptional activity. This is Transcription initiation factor IIA subunit 2 (toa2) from Fusarium vanettenii (strain ATCC MYA-4622 / CBS 123669 / FGSC 9596 / NRRL 45880 / 77-13-4) (Fusarium solani subsp. pisi).